The sequence spans 65 residues: Large ribosomal subunit protein bL35 (65 aa).

This sequence belongs to the bacterial ribosomal protein bL35 family.

The protein is Large ribosomal subunit protein bL35 of Polynucleobacter asymbioticus (strain DSM 18221 / CIP 109841 / QLW-P1DMWA-1) (Polynucleobacter necessarius subsp. asymbioticus).